The following is a 494-amino-acid chain: Alpha-amylase-related protein (494 aa).

Positions Met1–Ala20 are cleaved as a signal peptide. Gln21 bears the Pyrrolidone carboxylic acid mark. Cysteines 48 and 104 form a disulfide. Residues Asn118, Gln169, and Asp178 each coordinate Ca(2+). The cysteines at positions 157 and 171 are disulfide-linked. Residue Arg206 coordinates chloride. Asp208 (nucleophile) is an active-site residue. Position 212 (His212) interacts with Ca(2+). The active-site Proton donor is the Glu245. Chloride-binding residues include Asn308 and Arg343. 3 disulfide bridges follow: Cys376-Cys382, Cys418-Cys441, and Cys448-Cys460.

Belongs to the glycosyl hydrolase 13 family. As to quaternary structure, monomer. Ca(2+) is required as a cofactor. Requires chloride as cofactor.

It localises to the secreted. The catalysed reaction is Endohydrolysis of (1-&gt;4)-alpha-D-glucosidic linkages in polysaccharides containing three or more (1-&gt;4)-alpha-linked D-glucose units.. The sequence is that of Alpha-amylase-related protein (Amyrel) from Drosophila punjabiensis (Fruit fly).